Consider the following 456-residue polypeptide: MKRVYFIGIGGIGMSAIARYFHARGFNVCGYDLTPSPITDQLIKEGIEVHFSDDLNMIPKAFFSPTDSLIVYTPAVPADHSELTYFRSNGYRVVKRAEILGEITLIERALCVAGTHGKTTTSTLLAHLLKQSHVDCNAFLGGISNNYQSNLLLSDKSDLVVVEADEFDRSFHHLKPFMAIITSADPDHMDIYGTAENYRDSFEHFTSLIQSGGALVLKYGAPVNPRLGSDVSLFTYSSDDRQADYFASDITIRDGRLFFTWHYPGGQLEEVELGVPVHINVENAVAAMAIAHLNGVTVEELRSGIASFKGSHRRFEKVLDTERVVLIDDYAHHPVELDAAIRSVREIYSRKHIMGIFQPHLYSRTADFYQDFARSLSMLDEVVLLDIYPARELPLPGVTSRLILDLIENPNKTLVSKNDLLDYLHGNEIPDVVLILGAGDIDRLVIPVKQYLQTLC.

114 to 120 (GTHGKTT) serves as a coordination point for ATP.

Belongs to the MurCDEF family.

It is found in the cytoplasm. It catalyses the reaction UDP-N-acetyl-alpha-D-muramate + L-alanine + ATP = UDP-N-acetyl-alpha-D-muramoyl-L-alanine + ADP + phosphate + H(+). Its pathway is cell wall biogenesis; peptidoglycan biosynthesis. In terms of biological role, cell wall formation. The sequence is that of UDP-N-acetylmuramate--L-alanine ligase from Porphyromonas gingivalis (strain ATCC 33277 / DSM 20709 / CIP 103683 / JCM 12257 / NCTC 11834 / 2561).